The primary structure comprises 134 residues: Small ribosomal subunit protein uS9 (134 aa).

This sequence belongs to the universal ribosomal protein uS9 family.

In Pseudothermotoga lettingae (strain ATCC BAA-301 / DSM 14385 / NBRC 107922 / TMO) (Thermotoga lettingae), this protein is Small ribosomal subunit protein uS9.